The following is a 356-amino-acid chain: Probable L-asparaginase 4 (356 aa).

The signal sequence occupies residues 1-22; the sequence is MWGFIVTCGIFLVLLCQLRLLS. Residues 36-356 form the Asparaginase/glutaminase domain; it reads PNVTVFAMGG…RDIEGLFSIK (321 aa). N-linked (GlcNAc...) asparagine glycosylation is present at Asn-37. Thr-46 (O-isoaspartyl threonine intermediate) is an active-site residue. Asn-52 carries an N-linked (GlcNAc...) asparagine glycan. Substrate-binding positions include Ser-93 and 126–127; that span reads TD. Asn-176 carries an N-linked (GlcNAc...) asparagine glycan.

This sequence belongs to the asparaginase 1 family.

The protein resides in the secreted. The protein localises to the cell wall. The enzyme catalyses L-asparagine + H2O = L-aspartate + NH4(+). This Schizosaccharomyces pombe (strain 972 / ATCC 24843) (Fission yeast) protein is Probable L-asparaginase 4.